The sequence spans 1157 residues: MNSIDAVVRYSPLRNNLCNLPSAITTMLFSADFNIQQIIVELSWVPHQRAAQRRIAYCGWAGGITKTSSSNPVIEIDRSLASAIDLQENVNVTVNVHIDAVKAITVELEPVTSNDWEIVETHAQVLETYLLNQTRCVYPNQVLVVYPTPQTTARLLVKKIEPEVSTFAQLFNDTEVQIAPKVQKRPSISSVRSDSSGHRIRRVRSSTSTATGRRSVTNNGEVLPSMLRRSITLPNNTYAHVNDSKSGGYKVYCNLNELIPALQNAHFVSVSVLVGPGTPDRTGLTSSKIKQLNDSIDQAAQTQTNAAGSSHPPESSYTETGKVIAELVHDSKSPKGNVGLSELLACSLGIENTVGNLISLEQARKPLIKKPTVLVLHKYTTVSPASLDRVTIKHATEEQKRVQNKKERDTLLTQLMQLLSPLLDSCTFTNCVKLPKIGTLLPNGGLLQFKRIKSGWTTPLGKDNVSLEIGEEILRPESFSPSYDLLPDRKTHVRTQSDQYPTAQENLIESLSKIASGGSLLFGTSGSGKSLVISQVAQIVTNKGHFVKLLNCDKIMSESYNNLRGIFEDIFSEVSWKAPSLLILEDLDSLIPAEQEHSDSSQSRQLSEYFISKLSAQTINRDITILASSKSKESLNSLIFTTHLIEHDFQLRAPDKEARKQILQSYLDTLNVFCSEGELLNNIAVETEGYLPKDLKVLCDRAYHDLISRDILADSDSELDIEESSTPILNGSVGDIANKQSEIENGISGLELTNNSSSTIAVDKHGATIQKDNFDSALSGYIPQSLRGVKLQKSDVRWDDIGGLRDAKSILLETLEWPTKYAPIFSSCPLRLRSGILLYGYPGCGKTLLASAVAAQCGLNFISIKGPEILNKYIGPSEQSVRELFERAQAAKPCILFFDEFDSIAPKRGHDSTGVTDRVVNQMLTQMDGAEGLDGVYVLAATSRPDLIDSALLRPGRLDKSVICDMPDFDDRLDILQSVTRNMNVSKSVNLSSVAGECSGFSGADLQALAYNAYLKAVHEKLTKDESMAMAGEMDDNDDKKRMVECFQFSGNTEKKSLIELKPSDRATVIKKLEHLYQGNGNHAEGETKSKLATTAANSVIITSKDFEDSLSETKQSISQSEKRKLEAIYQQFISGRDGNMPDGTASNEIGARSTLM.

Disordered stretches follow at residues 187-221 and 1135-1157; these read SISSVRSDSSGHRIRRVRSSTSTATGRRSVTNNGE and SGRDGNMPDGTASNEIGARSTLM. A compositionally biased stretch (low complexity) spans 205–217; the sequence is SSTSTATGRRSVT.

This sequence belongs to the AAA ATPase family. Interacts with PEX6; forming the PEX1-PEX6 AAA ATPase complex, which is composed of a heterohexamer formed by a trimer of PEX1-PEX6 dimers.

Its subcellular location is the membrane. It catalyses the reaction ATP + H2O = ADP + phosphate + H(+). Functionally, component of the PEX1-PEX6 AAA ATPase complex involved in peroxisome biosynthesis. The complex acts as a protein dislocase complex that mediates the ATP-dependent extraction of the PEX5 receptor from peroxisomal membranes, an essential step for PEX5 recycling. Specifically recognizes PEX5 monoubiquitinated at 'Cys-6', and pulls it out of the peroxisome lumen through the PEX2-PEX10-PEX12 retrotranslocation channel. Extraction by the PEX1-PEX6 AAA ATPase complex is accompanied by unfolding of the TPR repeats and release of bound cargo from PEX5. The chain is Peroxisomal ATPase PEX1 from Komagataella pastoris (Yeast).